We begin with the raw amino-acid sequence, 1310 residues long: Vacuolating cytotoxin autotransporter (1310 aa).

A signal peptide spans 1–30 (MEIQQTHRKINRPIISLALVGVLMGTELGA). The segment at 339-364 (PEGGYESKTKDNPQNNPKNDAQKTEI) is disordered. Residues 350 to 364 (NPQNNPKNDAQKTEI) show a composition bias toward polar residues. Residues 1038–1310 (KYEKPTNVWA…ASNLGMRYSF (273 aa)) form the Autotransporter domain.

It is found in the periplasm. Its subcellular location is the secreted. The protein resides in the cell surface. The protein localises to the cell outer membrane. Its function is as follows. Induces vacuolation of eukaryotic cells. Causes ulceration and gastric lesions. The polypeptide is Vacuolating cytotoxin autotransporter (vacA) (Helicobacter pylori (Campylobacter pylori)).